Reading from the N-terminus, the 480-residue chain is tRNA-2-methylthio-N(6)-dimethylallyladenosine synthase (480 aa).

An MTTase N-terminal domain is found at 3–120; it reads KKLYIKTWGC…LPEMLNQLQH (118 aa). [4Fe-4S] cluster contacts are provided by Cys-12, Cys-49, Cys-83, Cys-157, Cys-161, and Cys-164. Residues 143 to 375 enclose the Radical SAM core domain; that stretch reads KADGASAFVS…QEQITHQALR (233 aa). Positions 378 to 441 constitute a TRAM domain; that stretch reads RQMLNTEQRV…ANSLRGELVR (64 aa).

The protein belongs to the methylthiotransferase family. MiaB subfamily. As to quaternary structure, monomer. [4Fe-4S] cluster serves as cofactor.

It localises to the cytoplasm. It carries out the reaction N(6)-dimethylallyladenosine(37) in tRNA + (sulfur carrier)-SH + AH2 + 2 S-adenosyl-L-methionine = 2-methylsulfanyl-N(6)-dimethylallyladenosine(37) in tRNA + (sulfur carrier)-H + 5'-deoxyadenosine + L-methionine + A + S-adenosyl-L-homocysteine + 2 H(+). Catalyzes the methylthiolation of N6-(dimethylallyl)adenosine (i(6)A), leading to the formation of 2-methylthio-N6-(dimethylallyl)adenosine (ms(2)i(6)A) at position 37 in tRNAs that read codons beginning with uridine. This chain is tRNA-2-methylthio-N(6)-dimethylallyladenosine synthase, found in Colwellia psychrerythraea (strain 34H / ATCC BAA-681) (Vibrio psychroerythus).